The primary structure comprises 245 residues: 1-(5-phosphoribosyl)-5-[(5-phosphoribosylamino)methylideneamino] imidazole-4-carboxamide isomerase (245 aa).

Asp7 (proton acceptor) is an active-site residue. Catalysis depends on Asp129, which acts as the Proton donor.

The protein belongs to the HisA/HisF family.

It localises to the cytoplasm. It catalyses the reaction 1-(5-phospho-beta-D-ribosyl)-5-[(5-phospho-beta-D-ribosylamino)methylideneamino]imidazole-4-carboxamide = 5-[(5-phospho-1-deoxy-D-ribulos-1-ylimino)methylamino]-1-(5-phospho-beta-D-ribosyl)imidazole-4-carboxamide. It participates in amino-acid biosynthesis; L-histidine biosynthesis; L-histidine from 5-phospho-alpha-D-ribose 1-diphosphate: step 4/9. The sequence is that of 1-(5-phosphoribosyl)-5-[(5-phosphoribosylamino)methylideneamino] imidazole-4-carboxamide isomerase from Alteromonas mediterranea (strain DSM 17117 / CIP 110805 / LMG 28347 / Deep ecotype).